Reading from the N-terminus, the 157-residue chain is Ribosomal RNA large subunit methyltransferase H (157 aa).

Residues Leu-73, Gly-105, and 124–129 (LSLMTF) each bind S-adenosyl-L-methionine.

Belongs to the RNA methyltransferase RlmH family. In terms of assembly, homodimer.

The protein localises to the cytoplasm. The catalysed reaction is pseudouridine(1915) in 23S rRNA + S-adenosyl-L-methionine = N(3)-methylpseudouridine(1915) in 23S rRNA + S-adenosyl-L-homocysteine + H(+). In terms of biological role, specifically methylates the pseudouridine at position 1915 (m3Psi1915) in 23S rRNA. The sequence is that of Ribosomal RNA large subunit methyltransferase H from Flavobacterium johnsoniae (strain ATCC 17061 / DSM 2064 / JCM 8514 / BCRC 14874 / CCUG 350202 / NBRC 14942 / NCIMB 11054 / UW101) (Cytophaga johnsonae).